The primary structure comprises 315 residues: Olfactory receptor 51L1 (315 aa).

Residues 1 to 27 (MGDWNNSDAVEPIFILRGFPGLEYVHS) are Extracellular-facing. N-linked (GlcNAc...) asparagine glycosylation is present at Asn-5. Residues 28 to 48 (WLSILFCLAYLVAFMGNVTIL) form a helical membrane-spanning segment. Residues 49 to 56 (SVIWIESS) lie on the Cytoplasmic side of the membrane. The helical transmembrane segment at 57-77 (LHQPMYYFISILAVNDLGMSL) threads the bilayer. At 78-101 (STLPTMLAVLWLDAPEIQASACYA) the chain is on the extracellular side. Cys-99 and Cys-191 form a disulfide bridge. A helical membrane pass occupies residues 102-122 (QLFFIHTFTFLESSVLLAMAF). At 123–141 (DRFVAICHPLHYPTILTNS) the chain is on the cytoplasmic side. A helical transmembrane segment spans residues 142-162 (VIGKIGLACLLRSLGVVLPTP). The Extracellular portion of the chain corresponds to 163–198 (LLLRHYHYCHGNALSHAFCLHQDVLRLSCTDARTNS). The helical transmembrane segment at 199-219 (IYGLCVVIATLGVDSIFILLS) threads the bilayer. Over 220-239 (YVLILNTVLDIASREEQLKA) the chain is Cytoplasmic. Residues 240-260 (LNTCVSHICVVLIFFVPVIGV) traverse the membrane as a helical segment. Topologically, residues 261 to 275 (SMVHRFGKHLSPIVH) are extracellular. A helical transmembrane segment spans residues 276-296 (ILMADIYLLLPPVLNPIVYSV). Residues 297-315 (RTKQIRLGILHKFVLRRRF) lie on the Cytoplasmic side of the membrane.

This sequence belongs to the G-protein coupled receptor 1 family.

It is found in the cell membrane. In terms of biological role, odorant receptor. The protein is Olfactory receptor 51L1 (OR51L1) of Homo sapiens (Human).